Reading from the N-terminus, the 907-residue chain is Catenin alpha-1 (907 aa).

The span at 870–879 (VKREKLDDGQ) shows a compositional bias: basic and acidic residues. A disordered region spans residues 870-895 (VKREKLDDGQTNKVKRSSQKKHINPV). The span at 882–892 (KVKRSSQKKHI) shows a compositional bias: basic residues.

Belongs to the vinculin/alpha-catenin family. As to quaternary structure, interacts with ctnnb1, jupa and cdh2. Interacts with cdh1 during early stages of oogenesis, interaction is no longer present when oocyte develops into the unfertilized egg. Expressed in the skin (at protein level). Expressed in the ovary.

It is found in the cell junction. It localises to the adherens junction. Its subcellular location is the cytoplasm. The protein resides in the cytoskeleton. The protein localises to the cell membrane. It is found in the nucleus. Associates with the cytoplasmic domain of a variety of cadherins, forming catenin and cadherin complexes which are further linked to the actin filament network and is thereby involved in cell-cell adhesion. Required for embryonic development, via maintenance of adherens junctions that facilitate the maintenance of the epithelial barrier. This Danio rerio (Zebrafish) protein is Catenin alpha-1.